A 365-amino-acid chain; its full sequence is Histidinol-phosphate aminotransferase (365 aa).

Lys220 is modified (N6-(pyridoxal phosphate)lysine).

Belongs to the class-II pyridoxal-phosphate-dependent aminotransferase family. Histidinol-phosphate aminotransferase subfamily. As to quaternary structure, homodimer. Requires pyridoxal 5'-phosphate as cofactor.

The catalysed reaction is L-histidinol phosphate + 2-oxoglutarate = 3-(imidazol-4-yl)-2-oxopropyl phosphate + L-glutamate. It participates in amino-acid biosynthesis; L-histidine biosynthesis; L-histidine from 5-phospho-alpha-D-ribose 1-diphosphate: step 7/9. In Neisseria meningitidis serogroup A / serotype 4A (strain DSM 15465 / Z2491), this protein is Histidinol-phosphate aminotransferase.